Here is a 238-residue protein sequence, read N- to C-terminus: Ribonuclease PH (238 aa).

Residues arginine 86 and 124-126 (GTR) contribute to the phosphate site.

This sequence belongs to the RNase PH family. In terms of assembly, homohexameric ring arranged as a trimer of dimers.

The enzyme catalyses tRNA(n+1) + phosphate = tRNA(n) + a ribonucleoside 5'-diphosphate. In terms of biological role, phosphorolytic 3'-5' exoribonuclease that plays an important role in tRNA 3'-end maturation. Removes nucleotide residues following the 3'-CCA terminus of tRNAs; can also add nucleotides to the ends of RNA molecules by using nucleoside diphosphates as substrates, but this may not be physiologically important. Probably plays a role in initiation of 16S rRNA degradation (leading to ribosome degradation) during starvation. This is Ribonuclease PH from Nitrosospira multiformis (strain ATCC 25196 / NCIMB 11849 / C 71).